We begin with the raw amino-acid sequence, 375 residues long: Trichodiene synthase (375 aa).

The protein belongs to the trichodiene synthase family.

The catalysed reaction is (2E,6E)-farnesyl diphosphate = trichodiene + diphosphate. It participates in sesquiterpene biosynthesis; trichothecene biosynthesis. TS is a member of the terpene cyclase group of enzymes. It catalyzes the isomerization and cyclization of farnesyl pyro-phosphate to form trichodiene, the first cyclic intermediate in the biosynthetic pathway for trichothecenes. It serves to branch trichothecene biosynthesis from the isoprenoid pathway. The sequence is that of Trichodiene synthase (TRI5) from Fusarium mesoamericanum.